We begin with the raw amino-acid sequence, 130 residues long: Small ribosomal subunit protein uS17m (130 aa).

A mitochondrion-targeting transit peptide spans methionine 1 to threonine 20.

Belongs to the universal ribosomal protein uS17 family. Component of the mitochondrial small ribosomal subunit (mt-SSU). Mature mammalian 55S mitochondrial ribosomes consist of a small (28S) and a large (39S) subunit. The 28S small subunit contains a 12S ribosomal RNA (12S mt-rRNA) and 30 different proteins. The 39S large subunit contains a 16S rRNA (16S mt-rRNA), a copy of mitochondrial valine transfer RNA (mt-tRNA(Val)), which plays an integral structural role, and 52 different proteins.

Its subcellular location is the mitochondrion. This Homo sapiens (Human) protein is Small ribosomal subunit protein uS17m (MRPS17).